A 141-amino-acid chain; its full sequence is Large ribosomal subunit protein uL11 (141 aa).

Belongs to the universal ribosomal protein uL11 family. In terms of assembly, part of the ribosomal stalk of the 50S ribosomal subunit. Interacts with L10 and the large rRNA to form the base of the stalk. L10 forms an elongated spine to which L12 dimers bind in a sequential fashion forming a multimeric L10(L12)X complex. In terms of processing, one or more lysine residues are methylated.

Its function is as follows. Forms part of the ribosomal stalk which helps the ribosome interact with GTP-bound translation factors. The sequence is that of Large ribosomal subunit protein uL11 from Streptococcus thermophilus (strain CNRZ 1066).